The following is a 293-amino-acid chain: ATP synthase gamma chain (293 aa).

It belongs to the ATPase gamma chain family. F-type ATPases have 2 components, CF(1) - the catalytic core - and CF(0) - the membrane proton channel. CF(1) has five subunits: alpha(3), beta(3), gamma(1), delta(1), epsilon(1). CF(0) has three main subunits: a, b and c.

It is found in the cell membrane. Functionally, produces ATP from ADP in the presence of a proton gradient across the membrane. The gamma chain is believed to be important in regulating ATPase activity and the flow of protons through the CF(0) complex. The chain is ATP synthase gamma chain from Streptococcus gordonii (strain Challis / ATCC 35105 / BCRC 15272 / CH1 / DL1 / V288).